Here is a 200-residue protein sequence, read N- to C-terminus: Isochorismatase family protein 2A (200 aa).

Belongs to the isochorismatase family.

The polypeptide is Isochorismatase family protein 2A (Dictyostelium discoideum (Social amoeba)).